A 352-amino-acid chain; its full sequence is Probable dual-specificity RNA methyltransferase RlmN (352 aa).

The active-site Proton acceptor is the Glu93. In terms of domain architecture, Radical SAM core spans 99 to 333; that stretch reads FNYGYSVCVT…IRLERGSSID (235 aa). Cysteines 106 and 336 form a disulfide. Residues Cys113, Cys117, and Cys120 each coordinate [4Fe-4S] cluster. S-adenosyl-L-methionine contacts are provided by residues 164–165, Ser196, and Asn295; that span reads GE. Cys336 acts as the S-methylcysteine intermediate in catalysis.

It belongs to the radical SAM superfamily. RlmN family. [4Fe-4S] cluster serves as cofactor.

It is found in the cytoplasm. It carries out the reaction adenosine(2503) in 23S rRNA + 2 reduced [2Fe-2S]-[ferredoxin] + 2 S-adenosyl-L-methionine = 2-methyladenosine(2503) in 23S rRNA + 5'-deoxyadenosine + L-methionine + 2 oxidized [2Fe-2S]-[ferredoxin] + S-adenosyl-L-homocysteine. The catalysed reaction is adenosine(37) in tRNA + 2 reduced [2Fe-2S]-[ferredoxin] + 2 S-adenosyl-L-methionine = 2-methyladenosine(37) in tRNA + 5'-deoxyadenosine + L-methionine + 2 oxidized [2Fe-2S]-[ferredoxin] + S-adenosyl-L-homocysteine. Specifically methylates position 2 of adenine 2503 in 23S rRNA and position 2 of adenine 37 in tRNAs. The chain is Probable dual-specificity RNA methyltransferase RlmN from Malacoplasma penetrans (strain HF-2) (Mycoplasma penetrans).